A 1243-amino-acid polypeptide reads, in one-letter code: Tau-tubulin kinase 2 (1243 aa).

One can recognise a Protein kinase domain in the interval 21 to 284; it reads WKVLRKIGGG…LLTSVFDNSI (264 aa). Residues 27–35 and Lys50 each bind ATP; that span reads IGGGGFGEI. Asp141 (proton acceptor) is an active-site residue. Ser445 is subject to Phosphoserine. Over residues 674 to 683 the composition is skewed to polar residues; the sequence is VASTQSTSGS. 2 disordered regions span residues 674–695 and 737–761; these read VASTQSTSGSFHYGPQPEKKDL and TGHDMLPNMRDGDTSQDLGPKDPPD. The residue at position 786 (Ser786) is a Phosphoserine. Residues 1063–1086 are disordered; it reads QINGSASPQFLPRPPPGKPPVRPG. Positions 1073 to 1084 are enriched in pro residues; it reads LPRPPPGKPPVR. Position 1102 is a phosphoserine (Ser1102). Positions 1115-1129 are enriched in polar residues; it reads QNGSQKSRSTTQCKS. Residues 1115–1243 are disordered; the sequence is QNGSQKSRST…KSKPASKLSR (129 aa). 3 stretches are compositionally biased toward low complexity: residues 1144 to 1170, 1187 to 1202, and 1227 to 1243; these read VVPRRSPSASPRSSSLPRTSSSSPSRA, SKSPPSHSGSSSSRRS, and SSKTPPGKSKPASKLSR.

It belongs to the protein kinase superfamily. CK1 Ser/Thr protein kinase family. Interacts with CEP164. Interacts with MCRS1; the interaction is required for recruitment of TTBK2 to the mother centriole.

It is found in the cell projection. The protein resides in the cilium. The protein localises to the cytoplasm. It localises to the cytoskeleton. Its subcellular location is the cilium basal body. It is found in the microtubule organizing center. The protein resides in the centrosome. The protein localises to the centriole. It localises to the cytosol. Its subcellular location is the nucleus. The enzyme catalyses L-seryl-[protein] + ATP = O-phospho-L-seryl-[protein] + ADP + H(+). It carries out the reaction L-threonyl-[protein] + ATP = O-phospho-L-threonyl-[protein] + ADP + H(+). Its function is as follows. Serine/threonine kinase that acts as a key regulator of ciliogenesis: controls the initiation of ciliogenesis by binding to the distal end of the basal body and promoting the removal of CCP110, which caps the mother centriole, leading to the recruitment of IFT proteins, which build the ciliary axoneme. Has some substrate preference for proteins that are already phosphorylated on a Tyr residue at the +2 position relative to the phosphorylation site. Able to phosphorylate tau on serines in vitro. Phosphorylates MPHOSPH9 which promotes its ubiquitination and proteasomal degradation, loss of MPHOSPH9 facilitates the removal of the CP110-CEP97 complex (a negative regulator of ciliogenesis) from the mother centrioles, promoting the initiation of ciliogenesis. Required for recruitment of CPLANE2 and INTU to the mother centriole. In Mus musculus (Mouse), this protein is Tau-tubulin kinase 2 (Ttbk2).